The primary structure comprises 302 residues: N-acetyl-D-glucosamine kinase (302 aa).

Residues 4–11 (GFDIGGTK) and 133–139 (GGGGLVL) each bind ATP. Residues His-156, Cys-176, Cys-178, and Cys-183 each contribute to the Zn(2+) site.

It belongs to the ROK (NagC/XylR) family. NagK subfamily.

The catalysed reaction is N-acetyl-D-glucosamine + ATP = N-acetyl-D-glucosamine 6-phosphate + ADP + H(+). It functions in the pathway cell wall biogenesis; peptidoglycan recycling. Its function is as follows. Catalyzes the phosphorylation of N-acetyl-D-glucosamine (GlcNAc) derived from cell-wall degradation, yielding GlcNAc-6-P. In Salmonella typhi, this protein is N-acetyl-D-glucosamine kinase.